The sequence spans 434 residues: Adenylosuccinate synthetase (434 aa).

GTP is bound by residues 15-21 (GDEGKGK) and 43-45 (GHT). Asp-16 functions as the Proton acceptor in the catalytic mechanism. Mg(2+) is bound by residues Asp-16 and Gly-43. Residues 16 to 19 (DEGK), 41 to 44 (NAGH), Thr-133, Arg-147, Gln-228, Thr-243, and Arg-307 each bind IMP. His-44 serves as the catalytic Proton donor. 303–309 (SVTGRAR) provides a ligand contact to substrate. GTP is bound by residues Arg-309, 335–337 (KLD), and 418–420 (STG).

The protein belongs to the adenylosuccinate synthetase family. In terms of assembly, homodimer. Requires Mg(2+) as cofactor.

Its subcellular location is the cytoplasm. It catalyses the reaction IMP + L-aspartate + GTP = N(6)-(1,2-dicarboxyethyl)-AMP + GDP + phosphate + 2 H(+). It functions in the pathway purine metabolism; AMP biosynthesis via de novo pathway; AMP from IMP: step 1/2. Plays an important role in the de novo pathway of purine nucleotide biosynthesis. Catalyzes the first committed step in the biosynthesis of AMP from IMP. The protein is Adenylosuccinate synthetase of Neisseria meningitidis serogroup C / serotype 2a (strain ATCC 700532 / DSM 15464 / FAM18).